The following is a 594-amino-acid chain: A-type ATP synthase subunit A (594 aa).

236–243 (GPFGSGKT) is an ATP binding site.

The protein belongs to the ATPase alpha/beta chains family. As to quaternary structure, has multiple subunits with at least A(3), B(3), C, D, E, F, H, I and proteolipid K(x).

It is found in the cell membrane. It carries out the reaction ATP + H2O + 4 H(+)(in) = ADP + phosphate + 5 H(+)(out). Functionally, component of the A-type ATP synthase that produces ATP from ADP in the presence of a proton gradient across the membrane. The A chain is the catalytic subunit. The protein is A-type ATP synthase subunit A of Pyrobaculum calidifontis (strain DSM 21063 / JCM 11548 / VA1).